Consider the following 309-residue polypeptide: Tagatose-6-phosphate kinase (309 aa).

Belongs to the carbohydrate kinase PfkB family. LacC subfamily.

The catalysed reaction is D-tagatofuranose 6-phosphate + ATP = D-tagatofuranose 1,6-bisphosphate + ADP + H(+). Its pathway is carbohydrate metabolism; D-tagatose 6-phosphate degradation; D-glyceraldehyde 3-phosphate and glycerone phosphate from D-tagatose 6-phosphate: step 1/2. The polypeptide is Tagatose-6-phosphate kinase (Streptococcus pyogenes serotype M2 (strain MGAS10270)).